Reading from the N-terminus, the 646-residue chain is MSQQIYPVPAHAKEHSHLTPADYARMYAESVEQPEVFWAEQAKSLDWVKTPTKIKNTSFDAHHVSIKWFEDGELNVAYNCIDRHLAKRGHVTAFIWEGDDPHSHDIITYHRLHDEVAKIANGLRKLGVGKGDRVAIYMPMIPQAVYAMLACARIGAVHTVIFGGFSPNAIADRVNNCQAKVLITADEGLRAGKHIPLKDNVDTALAEHDCPSMEQVIVFKHTGSHVSWGKDDVWWHDLTDGCSTDCPPEVMNAEDPLFILYTSGSTGQPKGVVHTTGGYLLWASITHKYVFDYKPGDIYWCAADVGWVTGHSYIVYGPLANGATSVMFEGVPTYPDVRRIGQIVDKHKVNILYTAPTAIRALMAHGDFPTEGISGESLRLLGSVGEPINPEAWHWYYTTVGQSRCPIVDTWWQTETGAAMLTPLPSVTAMKPGAASHPFFGVQPALVDGQGNELSGATEGNLIITDSWPGQARTVYGDHERFVQTYFTTYPGTYCTGDGARRDEDDYFWITGRVDDVLNVSGHRLGTAEIESALVSHNAVAEAAVVGYPHDLKGQGIYVYLMPNEGVEITDELTKEVSNWVRKELSPIATPDLIQWSSGLPKTRSGKIMRRILRKIAANEYEQLGDTSTLADPSVVDTLIEQRLNR.

Residues 190–193 and Thr309 contribute to the CoA site; that span reads RAGK. Residues 385–387, 409–414, Asp498, and Arg513 contribute to the ATP site; these read GEP and DTWWQT. CoA is bound at residue Ser521. Arg524 serves as a coordination point for ATP. The Mg(2+) site is built by Val535, His537, and Val540. Arg582 lines the CoA pocket. Lys607 carries the post-translational modification N6-acetyllysine.

The protein belongs to the ATP-dependent AMP-binding enzyme family. It depends on Mg(2+) as a cofactor. Post-translationally, acetylated. Deacetylation by the SIR2-homolog deacetylase activates the enzyme.

It catalyses the reaction acetate + ATP + CoA = acetyl-CoA + AMP + diphosphate. Its function is as follows. Catalyzes the conversion of acetate into acetyl-CoA (AcCoA), an essential intermediate at the junction of anabolic and catabolic pathways. AcsA undergoes a two-step reaction. In the first half reaction, AcsA combines acetate with ATP to form acetyl-adenylate (AcAMP) intermediate. In the second half reaction, it can then transfer the acetyl group from AcAMP to the sulfhydryl group of CoA, forming the product AcCoA. This chain is Acetyl-coenzyme A synthetase, found in Pseudoalteromonas atlantica (strain T6c / ATCC BAA-1087).